We begin with the raw amino-acid sequence, 410 residues long: Peptidase T-like protein YPO1009/y3403/YP_3421 (410 aa).

H82 contributes to the Zn(2+) binding site. The active site involves D84. Residue D144 participates in Zn(2+) binding. The Proton acceptor role is filled by E176. 3 residues coordinate Zn(2+): E177, D200, and H382.

This sequence belongs to the peptidase M20B family. Zn(2+) is required as a cofactor.

This chain is Peptidase T-like protein YPO1009/y3403/YP_3421, found in Yersinia pestis.